The chain runs to 376 residues: Meiotically up-regulated gene 183 protein (376 aa).

The segment at Ser-334–Glu-376 is disordered. Acidic residues predominate over residues Asp-353–Glu-376.

This sequence belongs to the RTT106 family.

Functionally, has a role in meiosis. The protein is Meiotically up-regulated gene 183 protein (mug183) of Schizosaccharomyces pombe (strain 972 / ATCC 24843) (Fission yeast).